The sequence spans 625 residues: Dual specificity protein phosphatase 8 (625 aa).

Residues 23 to 138 enclose the Rhodanese domain; the sequence is GPGGPLVIDS…FSSCFPGLCE (116 aa). One can recognise a Tyrosine-protein phosphatase domain in the interval 160 to 302; that stretch reads GLTRILPHLY…LLEYERSLKL (143 aa). Cys246 (phosphocysteine intermediate) is an active-site residue. Positions 306 to 586 are disordered; it reads LQGDPGTPSG…PAPETQFKRR (281 aa). Basic and acidic residues predominate over residues 380–389; it reads SSDRLQDTNR. Positions 431–448 are enriched in low complexity; sequence AALGLSSPSPDSPDAAPE. Positions 555–570 are enriched in basic and acidic residues; sequence DLRRREAARAEPRDAR.

Belongs to the protein-tyrosine phosphatase family. Non-receptor class dual specificity subfamily. In terms of assembly, monomer. As to expression, abundant in brain, heart and skeletal muscle.

It is found in the cytoplasm. It localises to the nucleus. It catalyses the reaction O-phospho-L-tyrosyl-[protein] + H2O = L-tyrosyl-[protein] + phosphate. It carries out the reaction O-phospho-L-seryl-[protein] + H2O = L-seryl-[protein] + phosphate. The catalysed reaction is O-phospho-L-threonyl-[protein] + H2O = L-threonyl-[protein] + phosphate. Has phosphatase activity with synthetic phosphatase substrates and negatively regulates mitogen-activated protein kinase activity, presumably by catalysing their dephosphorylation. Expected to display protein phosphatase activity toward phosphotyrosine, phosphoserine and phosphothreonine residues. The polypeptide is Dual specificity protein phosphatase 8 (DUSP8) (Homo sapiens (Human)).